We begin with the raw amino-acid sequence, 224 residues long: Claudin-19 (224 aa).

Topologically, residues Met-1–Gln-7 are cytoplasmic. A helical membrane pass occupies residues Leu-8–Pro-28. Residues Gln-29–Arg-81 lie on the Extracellular side of the membrane. Cys-54 and Cys-64 are disulfide-bonded. The chain crosses the membrane as a helical span at residues Ala-82–Met-102. Residues Lys-103 to Arg-117 are Cytoplasmic-facing. The chain crosses the membrane as a helical span at residues Val-118–Ser-138. The Extracellular portion of the chain corresponds to Trp-139 to Glu-160. The chain crosses the membrane as a helical span at residues Phe-161 to Phe-181. Residues Leu-182 to Val-224 are Cytoplasmic-facing.

It belongs to the claudin family. As to quaternary structure, can form homo- and heteropolymeric tight junction strands. Interacts with other claudins including CLDN3, CLDN10, CLDN16 and CLDN18 with highest affinity for CLDN16. Interacts (via PDZ-binding motif TRV) with TJP1 (via PDZ domain). (Microbial infection) Interacts (via both extracellular domains) with Clostridium perfringens enterotoxin CPE; the interaction disrupts claudin assembly in tight junctions. As to expression, expressed in the corticomedullary axis of the TAL, specifically in the cortex and the outer stripe of outer medulla (OSOM) zone (at protein level). Expressed in peripheral nervous system, in Schwan cells (at protein level).

Its subcellular location is the cell junction. It is found in the tight junction. The protein resides in the cell membrane. It carries out the reaction Mg(2+)(in) = Mg(2+)(out). It catalyses the reaction Ca(2+)(in) = Ca(2+)(out). The catalysed reaction is Na(+)(in) = Na(+)(out). The enzyme catalyses K(+)(in) = K(+)(out). It carries out the reaction Rb(+)(in) = Rb(+)(out). It catalyses the reaction Cs(+)(in) = Cs(+)(out). The catalysed reaction is Li(+)(in) = Li(+)(out). Functionally, forms paracellular channels: coassembles with CLDN16 into tight junction strands with cation-selective channels through the strands, conveying epithelial permeability in a process known as paracellular tight junction permeability. Involved in the maintenance of ion gradients along the nephron. In the thick ascending limb (TAL) of Henle's loop, facilitates sodium paracellular permeability from the interstitial compartment to the lumen, contributing to the lumen-positive transepithelial potential that drives paracellular magnesium and calcium reabsorption. Forms paracellular barriers on its own. In the peripheral nervous system, represents a major constituent of the tight junctions in Schwann cells and contributes to electrical sealing. During retinal neurogenesis, may regulate the barrier properties of tight junctions in retinal pigment epithelium, required for proper retinal tissue differentiation and vision. The chain is Claudin-19 from Mus musculus (Mouse).